A 257-amino-acid chain; its full sequence is UPF0246 protein SO_3540 (257 aa).

Belongs to the UPF0246 family.

In Shewanella oneidensis (strain ATCC 700550 / JCM 31522 / CIP 106686 / LMG 19005 / NCIMB 14063 / MR-1), this protein is UPF0246 protein SO_3540.